The following is a 214-amino-acid chain: ATP-dependent Clp protease proteolytic subunit (214 aa).

The active-site Nucleophile is serine 114. The active site involves histidine 139.

Belongs to the peptidase S14 family. In terms of assembly, fourteen ClpP subunits assemble into 2 heptameric rings which stack back to back to give a disk-like structure with a central cavity, resembling the structure of eukaryotic proteasomes.

The protein localises to the cytoplasm. It carries out the reaction Hydrolysis of proteins to small peptides in the presence of ATP and magnesium. alpha-casein is the usual test substrate. In the absence of ATP, only oligopeptides shorter than five residues are hydrolyzed (such as succinyl-Leu-Tyr-|-NHMec, and Leu-Tyr-Leu-|-Tyr-Trp, in which cleavage of the -Tyr-|-Leu- and -Tyr-|-Trp bonds also occurs).. Cleaves peptides in various proteins in a process that requires ATP hydrolysis. Has a chymotrypsin-like activity. Plays a major role in the degradation of misfolded proteins. The chain is ATP-dependent Clp protease proteolytic subunit from Nitrosomonas eutropha (strain DSM 101675 / C91 / Nm57).